The chain runs to 295 residues: 4-hydroxy-tetrahydrodipicolinate synthase (295 aa).

Thr-46 provides a ligand contact to pyruvate. Tyr-134 acts as the Proton donor/acceptor in catalysis. The active-site Schiff-base intermediate with substrate is Lys-162. Pyruvate is bound at residue Ile-205.

This sequence belongs to the DapA family. Homotetramer; dimer of dimers.

It is found in the cytoplasm. The enzyme catalyses L-aspartate 4-semialdehyde + pyruvate = (2S,4S)-4-hydroxy-2,3,4,5-tetrahydrodipicolinate + H2O + H(+). It participates in amino-acid biosynthesis; L-lysine biosynthesis via DAP pathway; (S)-tetrahydrodipicolinate from L-aspartate: step 3/4. Catalyzes the condensation of (S)-aspartate-beta-semialdehyde [(S)-ASA] and pyruvate to 4-hydroxy-tetrahydrodipicolinate (HTPA). This chain is 4-hydroxy-tetrahydrodipicolinate synthase, found in Anaeromyxobacter dehalogenans (strain 2CP-1 / ATCC BAA-258).